A 377-amino-acid chain; its full sequence is 2-aminoethylphosphonate--pyruvate transaminase (377 aa).

Lys-194 is modified (N6-(pyridoxal phosphate)lysine).

This sequence belongs to the class-V pyridoxal-phosphate-dependent aminotransferase family. PhnW subfamily. As to quaternary structure, homodimer. Pyridoxal 5'-phosphate serves as cofactor.

It carries out the reaction (2-aminoethyl)phosphonate + pyruvate = phosphonoacetaldehyde + L-alanine. In terms of biological role, involved in phosphonate degradation. This is 2-aminoethylphosphonate--pyruvate transaminase from Cupriavidus necator (strain ATCC 17699 / DSM 428 / KCTC 22496 / NCIMB 10442 / H16 / Stanier 337) (Ralstonia eutropha).